A 256-amino-acid polypeptide reads, in one-letter code: 4-oxalocrotonate decarboxylase (256 aa).

The protein belongs to the hydratase/decarboxylase family. Forms a complex with AmnF. Mg(2+) is required as a cofactor. The cofactor is Mn(2+).

It catalyses the reaction (3E)-2-oxohex-3-enedioate + H(+) = 2-oxopent-4-enoate + CO2. Its activity is regulated as follows. Strongly inhibited by Fe(2+), Fe(3+), K(3)[Fe(CN)(6)], Ag(+) and Cu(2+). Involved in the modified meta-cleavage pathway for the 2-aminophenol catabolism. The polypeptide is 4-oxalocrotonate decarboxylase (amnE) (Pseudomonas sp).